The following is a 259-amino-acid chain: O-antigen export system permease protein RfbA (259 aa).

6 consecutive transmembrane segments (helical) span residues 33-53 (LGYL…YFIF), 73-95 (FPWQ…NAQI), 111-131 (VMME…FLFV), 142-162 (WGIP…SIIF), 176-196 (VSLG…SDMI), and 228-248 (EYIS…LSIF). Residues 33–251 (LGYLWSVANP…VVGLSIFNKL (219 aa)) form the ABC transmembrane type-2 domain.

Belongs to the ABC-2 integral membrane protein family.

The protein localises to the cell inner membrane. Functionally, may form an ATP-driven O-antigen export apparatus, in association with RfbB. The protein is O-antigen export system permease protein RfbA (rfbA) of Klebsiella pneumoniae.